A 295-amino-acid chain; its full sequence is Ribosomal RNA small subunit methyltransferase H (295 aa).

Residues 35 to 37 (GGH), E55, F82, D103, and Q110 contribute to the S-adenosyl-L-methionine site.

Belongs to the methyltransferase superfamily. RsmH family.

The protein localises to the cytoplasm. It carries out the reaction cytidine(1402) in 16S rRNA + S-adenosyl-L-methionine = N(4)-methylcytidine(1402) in 16S rRNA + S-adenosyl-L-homocysteine + H(+). Its function is as follows. Specifically methylates the N4 position of cytidine in position 1402 (C1402) of 16S rRNA. In Desulfotalea psychrophila (strain LSv54 / DSM 12343), this protein is Ribosomal RNA small subunit methyltransferase H.